The primary structure comprises 286 residues: Small ribosomal subunit protein uS2 (286 aa).

Residues 213 to 286 form a disordered region; the sequence is EEQAQNNKWA…GAQEGGEWGS (74 aa). Residues 227-241 are compositionally biased toward low complexity; the sequence is SPALSAAVPSSAAPV. Polar residues predominate over residues 244–270; the sequence is WSSSPSKETTEWGASNTAAAAKSSWSN. A compositionally biased stretch (gly residues) spans 274–286; sequence GEWGAQEGGEWGS.

The protein belongs to the universal ribosomal protein uS2 family. In terms of assembly, component of the small ribosomal subunit. Mature ribosomes consist of a small (40S) and a large (60S) subunit. The 40S subunit contains about 33 different proteins and 1 molecule of RNA (18S). The 60S subunit contains about 49 different proteins and 3 molecules of RNA (28S, 5.8S and 5S). Interacts with ribosomal protein S21.

Its subcellular location is the cytoplasm. Required for the assembly and/or stability of the 40S ribosomal subunit. Required for the processing of the 20S rRNA-precursor to mature 18S rRNA in a late step of the maturation of 40S ribosomal subunits. The polypeptide is Small ribosomal subunit protein uS2 (Trichoplax adhaerens (Trichoplax reptans)).